The primary structure comprises 118 residues: Large ribosomal subunit protein bL20 (118 aa).

It belongs to the bacterial ribosomal protein bL20 family.

In terms of biological role, binds directly to 23S ribosomal RNA and is necessary for the in vitro assembly process of the 50S ribosomal subunit. It is not involved in the protein synthesizing functions of that subunit. This chain is Large ribosomal subunit protein bL20, found in Pseudomonas fluorescens (strain ATCC BAA-477 / NRRL B-23932 / Pf-5).